The following is a 247-amino-acid chain: 2-dehydro-3-deoxy-phosphogluconate aldolase (247 aa).

It belongs to the DagF family.

The enzyme catalyses 2-dehydro-3-deoxy-6-phospho-D-gluconate = D-glyceraldehyde 3-phosphate + pyruvate. Its function is as follows. Involved in the catabolism of D-glucosaminate. Catalyzes the conversion of keto-3-deoxygluconate 6-phosphate (KDGP) to yield pyruvate and glyceraldehyde-3-phosphate. This is 2-dehydro-3-deoxy-phosphogluconate aldolase from Salmonella typhimurium (strain 14028s / SGSC 2262).